The chain runs to 434 residues: Homogentisate 1,2-dioxygenase (434 aa).

His-289 functions as the Proton acceptor in the catalytic mechanism. The Fe cation site is built by His-332 and Glu-338. Homogentisate is bound by residues Tyr-347 and His-368. A Fe cation-binding site is contributed by His-368.

Belongs to the homogentisate dioxygenase family. Hexamer; dimer of trimers. The cofactor is Fe cation.

The catalysed reaction is homogentisate + O2 = 4-maleylacetoacetate + H(+). It functions in the pathway amino-acid degradation; L-phenylalanine degradation; acetoacetate and fumarate from L-phenylalanine: step 4/6. Involved in the catabolism of homogentisate (2,5-dihydroxyphenylacetate or 2,5-OH-PhAc), a central intermediate in the degradation of phenylalanine and tyrosine. Catalyzes the oxidative ring cleavage of the aromatic ring of homogentisate to yield maleylacetoacetate. This chain is Homogentisate 1,2-dioxygenase, found in Pseudomonas fluorescens (strain ATCC BAA-477 / NRRL B-23932 / Pf-5).